A 1190-amino-acid chain; its full sequence is DNA-directed RNA polymerase subunit beta (1190 aa).

It belongs to the RNA polymerase beta chain family. As to quaternary structure, the RNAP catalytic core consists of 2 alpha, 1 beta, 1 beta' and 1 omega subunit. When a sigma factor is associated with the core the holoenzyme is formed, which can initiate transcription.

It catalyses the reaction RNA(n) + a ribonucleoside 5'-triphosphate = RNA(n+1) + diphosphate. DNA-dependent RNA polymerase catalyzes the transcription of DNA into RNA using the four ribonucleoside triphosphates as substrates. This is DNA-directed RNA polymerase subunit beta from Geobacillus thermodenitrificans (strain NG80-2).